The chain runs to 717 residues: Ubiquitin carboxyl-terminal hydrolase 11 (717 aa).

The tract at residues A231–K268 is disordered. The segment covering S242–S257 has biased composition (low complexity). The span at K258–K268 shows a compositional bias: basic and acidic residues. Positions T298–M707 constitute a USP domain. C307 acts as the Nucleophile in catalysis. Residues K531–N577 form a disordered region. Residues S549–H564 are compositionally biased toward basic residues. Residue H649 is the Proton acceptor of the active site.

The protein belongs to the peptidase C19 family.

The catalysed reaction is Thiol-dependent hydrolysis of ester, thioester, amide, peptide and isopeptide bonds formed by the C-terminal Gly of ubiquitin (a 76-residue protein attached to proteins as an intracellular targeting signal).. The protein is Ubiquitin carboxyl-terminal hydrolase 11 (UBP11) of Saccharomyces cerevisiae (strain ATCC 204508 / S288c) (Baker's yeast).